Reading from the N-terminus, the 66-residue chain is Clarkitoxin-1 (66 aa).

Cystine bridges form between Cys-3–Cys-24, Cys-17–Cys-42, Cys-46–Cys-59, and Cys-60–Cys-65.

Expressed by the venom gland.

The protein localises to the secreted. Functionally, not toxic to mice when injected intravenously or intraperitoneally. The sequence is that of Clarkitoxin-1 from Micrurus clarki (Clark's coral snake).